The following is a 322-amino-acid chain: CMP-sialic acid transporter 1 (322 aa).

At 1-2 the chain is on the cytoplasmic side; that stretch reads MQ. A helical membrane pass occupies residues 3-23; it reads WYLVAALLTVLTSSQGILTTL. Topologically, residues 24 to 33 are lumenal; the sequence is SQSNGKYKYD. The chain crosses the membrane as a helical span at residues 34-54; it reads YATIPFLAELFKLSFSSFFLW. Over 55 to 75 the chain is Cytoplasmic; that stretch reads KECQSSSPPRMTKEWRSIRLY. Residues 76 to 96 traverse the membrane as a helical segment; that stretch reads LVPSVIYLIHNNVQFATLTYV. Residues 97 to 100 lie on the Lumenal side of the membrane; it reads DPST. Residues 101–120 traverse the membrane as a helical segment; it reads YQIMGNLKIVTTGILFRLVL. Topologically, residues 121–126 are cytoplasmic; it reads KRKLSN. A helical transmembrane segment spans residues 127–144; that stretch reads LQWMAVVLLAVGTTTSQV. The Lumenal portion of the chain corresponds to 145–157; sequence KGCGDAPCDSLFS. The chain crosses the membrane as a helical span at residues 158 to 178; the sequence is APFQGYMLGILSACLSALAGV. Over 179 to 198 the chain is Cytoplasmic; it reads YTEYLMKKNNDSLYWQNVQL. A helical membrane pass occupies residues 199–219; the sequence is YTFGVIFNMGWLIYGDFKAGF. At 220 to 233 the chain is on the lumenal side; it reads ERGPWWQRLFNGYS. The chain crosses the membrane as a helical span at residues 234-254; the sequence is ITTWMVVFNLGSTGLLVSWLM. Residues 255 to 262 are Cytoplasmic-facing; sequence KYSDNIVK. Residues 263–283 form a helical membrane-spanning segment; the sequence is VYSTSMGMLLTMVLSVYLFNV. The Lumenal segment spans residues 284-286; it reads RAT.

Belongs to the nucleotide-sugar transporter family. CMP-Sialate:CMP antiporter (TC 2.A.7.12) subfamily.

It is found in the golgi apparatus membrane. Functionally, sugar transporter involved in the transport of CMP-sialic acid from the cytoplasm into the Golgi. May transport important nucleotide sugars such as CMP-Kdo (2-keto-3-deoxy-D-manno-octulosonic acid) in physiological conditions. This chain is CMP-sialic acid transporter 1, found in Oryza sativa subsp. indica (Rice).